The primary structure comprises 340 residues: Beta-1,3-N-acetylglucosaminyltransferase radical fringe (340 aa).

At 1 to 4 the chain is on the cytoplasmic side; sequence MKIT. A helical; Signal-anchor for type II membrane protein transmembrane segment spans residues 5–25; that stretch reads YVGLIKVCFLVFLLLCATVLL. At 26–340 the chain is on the lumenal side; it reads NISWRQRDSS…AFSLAEDPTR (315 aa). The N-linked (GlcNAc...) asparagine glycan is linked to Asn42. Arg110 contacts substrate. Asn149 carries an N-linked (GlcNAc...) asparagine glycan. Disulfide bonds link Cys150/Cys161 and Cys179/Cys242. Asp183 contributes to the substrate binding site. Asp184 is a Mn(2+) binding site. The active site involves Asp272. His296 is a binding site for Mn(2+).

Belongs to the glycosyltransferase 31 family. Requires Mn(2+) as cofactor.

The protein localises to the golgi apparatus membrane. The catalysed reaction is 3-O-(alpha-L-fucosyl)-L-threonyl-[EGF-like domain protein] + UDP-N-acetyl-alpha-D-glucosamine = 3-O-(N-acetyl-beta-D-glucosaminyl-(1-&gt;3)-alpha-L-fucosyl)-L-threonyl-[EGF-like domain protein] + UDP + H(+). It catalyses the reaction 3-O-(alpha-L-fucosyl)-L-seryl-[EGF-like domain protein] + UDP-N-acetyl-alpha-D-glucosamine = 3-O-(N-acetyl-beta-D-glucosaminyl-(1-&gt;3)-alpha-L-fucosyl)-L-seryl-[EGF-like domain protein] + UDP + H(+). In terms of biological role, glycosyltransferase that initiates the elongation of O-linked fucose residues attached to EGF-like repeats in the extracellular domain of Notch molecules. This chain is Beta-1,3-N-acetylglucosaminyltransferase radical fringe (rfng), found in Xenopus laevis (African clawed frog).